Here is a 557-residue protein sequence, read N- to C-terminus: CTP synthase (557 aa).

Positions 1 to 270 (MTKYVFVTGG…DAIICEELKL (270 aa)) are amidoligase domain. Serine 13 is a binding site for CTP. Serine 13 is a binding site for UTP. Residues 14 to 19 (SLGKGI) and aspartate 71 each bind ATP. The Mg(2+) site is built by aspartate 71 and glutamate 144. Residues 151–153 (DIE), 191–196 (KTKPTQ), and lysine 227 each bind CTP. UTP contacts are provided by residues 191 to 196 (KTKPTQ) and lysine 227. The Glutamine amidotransferase type-1 domain maps to 295-547 (TIGMVGKYVD…VEAALAHQQS (253 aa)). Glycine 356 is an L-glutamine binding site. Catalysis depends on cysteine 383, which acts as the Nucleophile; for glutamine hydrolysis. Residues 384 to 387 (LGMQ), glutamate 407, and arginine 473 contribute to the L-glutamine site. Active-site residues include histidine 520 and glutamate 522.

This sequence belongs to the CTP synthase family. As to quaternary structure, homotetramer.

The enzyme catalyses UTP + L-glutamine + ATP + H2O = CTP + L-glutamate + ADP + phosphate + 2 H(+). It carries out the reaction L-glutamine + H2O = L-glutamate + NH4(+). The catalysed reaction is UTP + NH4(+) + ATP = CTP + ADP + phosphate + 2 H(+). It functions in the pathway pyrimidine metabolism; CTP biosynthesis via de novo pathway; CTP from UDP: step 2/2. With respect to regulation, allosterically activated by GTP, when glutamine is the substrate; GTP has no effect on the reaction when ammonia is the substrate. The allosteric effector GTP functions by stabilizing the protein conformation that binds the tetrahedral intermediate(s) formed during glutamine hydrolysis. Inhibited by the product CTP, via allosteric rather than competitive inhibition. Its function is as follows. Catalyzes the ATP-dependent amination of UTP to CTP with either L-glutamine or ammonia as the source of nitrogen. Regulates intracellular CTP levels through interactions with the four ribonucleotide triphosphates. This chain is CTP synthase, found in Paraburkholderia xenovorans (strain LB400).